A 191-amino-acid chain; its full sequence is Flagellar transcriptional regulator FlhC (191 aa).

4 residues coordinate Zn(2+): Cys137, Cys140, Cys157, and Cys160.

This sequence belongs to the FlhC family. In terms of assembly, heterohexamer composed of two FlhC and four FlhD subunits. Each FlhC binds a FlhD dimer, forming a heterotrimer, and a hexamer assembles by dimerization of two heterotrimers. Zn(2+) is required as a cofactor.

The protein localises to the cytoplasm. Functionally, functions in complex with FlhD as a master transcriptional regulator that regulates transcription of several flagellar and non-flagellar operons by binding to their promoter region. Activates expression of class 2 flagellar genes, including fliA, which is a flagellum-specific sigma factor that turns on the class 3 genes. Also regulates genes whose products function in a variety of physiological pathways. This Nitrosomonas eutropha (strain DSM 101675 / C91 / Nm57) protein is Flagellar transcriptional regulator FlhC.